A 36-amino-acid chain; its full sequence is Beta-amanitin proprotein (36 aa).

Residues 1–10 (MSDINATRLP) constitute a propeptide that is removed on maturation. Positions 11–18 (IWGIGCDP) form a cross-link, cyclopeptide (Ile-Pro). Residues 12–16 (WGIGC) constitute a cross-link (2'-cysteinyl-6'-hydroxytryptophan sulfoxide (Trp-Cys)). A propeptide spanning residues 19-36 (CIGDDVTALLTRGEASLC) is cleaved from the precursor.

Belongs to the MSDIN fungal toxin family. Processed by the macrocyclase-peptidase enzyme POPB to yield a toxic cyclic decapeptide. POPB first removes 10 residues from the N-terminus. Conformational trapping of the remaining peptide forces the enzyme to release this intermediate rather than proceed to macrocyclization. The enzyme rebinds the remaining peptide in a different conformation and catalyzes macrocyclization of the N-terminal 8 residues.

Its function is as follows. Toxin belonging to the bicyclic octapeptides amatoxins that acts by binding non-competitively to RNA polymerase II and greatly slowing the elongation of transcripts from target promoters. The chain is Beta-amanitin proprotein from Amanita phalloides (Death cap).